The primary structure comprises 189 residues: Leucine repeat adapter protein 25 (189 aa).

Serine 28 bears the Phosphoserine mark. The segment at 54–83 (ELSRAARAPDGPRHAAGAANAGPAAGPRRP) is disordered. Positions 67–83 (HAAGAANAGPAAGPRRP) are enriched in low complexity. The stretch at 86–114 (LDSALAALRKEMVGLRQLDMSLLCQLWGL) is one LRR repeat. A disordered region spans residues 141-175 (DSSYPPDAGLSDDEEPPDASLPPDPPPLTVPQTHN). The span at 159–169 (ASLPPDPPPLT) shows a compositional bias: pro residues. Serine 188 bears the Phosphoserine mark.

It belongs to the FAM89 family. As to quaternary structure, interacts with SKI. Interacts (via LRR repeat) with CDC42BPA (via AGC-kinase C-terminal domain), CDC42BPB (via AGC-kinase C-terminal domain) and LIMK1 (via LIM zinc-binding domains). Forms a tripartite complex with CDC42BPA, CDC42BPB and LIMK1.

The protein localises to the cytoplasm. It is found in the cell projection. Its subcellular location is the lamellipodium. Negatively regulates TGF-beta-induced signaling; in cooperation with SKI prevents the translocation of SMAD2 from the nucleus to the cytoplasm in response to TGF-beta. Acts as an adapter that mediates the specific recognition of LIMK1 by CDC42BPA and CDC42BPB in the lamellipodia. LRAP25-mediated CDC42BPA/CDC42BPB targeting to LIMK1 and the lamellipodium results in LIMK1 activation and the subsequent phosphorylation of CFL1 which is important for lamellipodial F-actin regulation. The sequence is that of Leucine repeat adapter protein 25 (FAM89B) from Homo sapiens (Human).